We begin with the raw amino-acid sequence, 688 residues long: DNA ligase (688 aa).

NAD(+) contacts are provided by residues 42–46, 91–92, and Glu128; these read DAEYD and SL. Lys130 serves as the catalytic N6-AMP-lysine intermediate. The NAD(+) site is built by Arg151, Glu188, Lys305, and Lys329. Residues Cys423, Cys426, Cys441, and Cys447 each coordinate Zn(2+). Positions 608–688 constitute a BRCT domain; the sequence is APQGVLAGKT…GMRKLLEGQL (81 aa).

The protein belongs to the NAD-dependent DNA ligase family. LigA subfamily. Mg(2+) serves as cofactor. The cofactor is Mn(2+).

It catalyses the reaction NAD(+) + (deoxyribonucleotide)n-3'-hydroxyl + 5'-phospho-(deoxyribonucleotide)m = (deoxyribonucleotide)n+m + AMP + beta-nicotinamide D-nucleotide.. Functionally, DNA ligase that catalyzes the formation of phosphodiester linkages between 5'-phosphoryl and 3'-hydroxyl groups in double-stranded DNA using NAD as a coenzyme and as the energy source for the reaction. It is essential for DNA replication and repair of damaged DNA. This Paraburkholderia phytofirmans (strain DSM 17436 / LMG 22146 / PsJN) (Burkholderia phytofirmans) protein is DNA ligase.